The following is a 477-amino-acid chain: Bifunctional protein HldE (477 aa).

The tract at residues 1-320 (MKDSLPAFEK…SLSDTHHSET (320 aa)) is ribokinase. 195–198 (NLHE) lines the ATP pocket. Asp-264 is an active-site residue. The tract at residues 346-477 (MTNGCFDILH…KIIENIMANQ (132 aa)) is cytidylyltransferase.

In the N-terminal section; belongs to the carbohydrate kinase PfkB family. It in the C-terminal section; belongs to the cytidylyltransferase family. As to quaternary structure, homodimer.

It catalyses the reaction D-glycero-beta-D-manno-heptose 7-phosphate + ATP = D-glycero-beta-D-manno-heptose 1,7-bisphosphate + ADP + H(+). The enzyme catalyses D-glycero-beta-D-manno-heptose 1-phosphate + ATP + H(+) = ADP-D-glycero-beta-D-manno-heptose + diphosphate. Its pathway is nucleotide-sugar biosynthesis; ADP-L-glycero-beta-D-manno-heptose biosynthesis; ADP-L-glycero-beta-D-manno-heptose from D-glycero-beta-D-manno-heptose 7-phosphate: step 1/4. The protein operates within nucleotide-sugar biosynthesis; ADP-L-glycero-beta-D-manno-heptose biosynthesis; ADP-L-glycero-beta-D-manno-heptose from D-glycero-beta-D-manno-heptose 7-phosphate: step 3/4. Functionally, catalyzes the phosphorylation of D-glycero-D-manno-heptose 7-phosphate at the C-1 position to selectively form D-glycero-beta-D-manno-heptose-1,7-bisphosphate. Its function is as follows. Catalyzes the ADP transfer from ATP to D-glycero-beta-D-manno-heptose 1-phosphate, yielding ADP-D-glycero-beta-D-manno-heptose. This is Bifunctional protein HldE from Shewanella piezotolerans (strain WP3 / JCM 13877).